A 1165-amino-acid polypeptide reads, in one-letter code: Adhesion G-protein coupled receptor G6 (1165 aa).

The N-terminal stretch at 1-30 is a signal peptide; it reads MMFDTLGKRCCPWRLKPSALLFLFVLCVTC. The Extracellular segment spans residues 31–832; the sequence is VPLSVCGCGS…ASQIDGRNTK (802 aa). Cys-41 and Cys-67 are disulfide-bonded. A CUB domain is found at 41-149; the sequence is CRLVLSNPSG…KGFNASYIRV (109 aa). Ca(2+) contacts are provided by Glu-89 and Asp-97. Cysteines 94 and 111 form a disulfide. The N-linked (GlcNAc...) asparagine glycan is linked to Asn-121. The Ca(2+) site is built by Asp-134, Ser-136, and Ile-137. N-linked (GlcNAc...) asparagine glycosylation is present at Asn-143. A Pentraxin (PTX) domain is found at 154–356; it reads RNQKVILPQT…ALKAEGNLSC (203 aa). 2 cysteine pairs are disulfide-bonded: Cys-186–Cys-254 and Cys-231–Cys-277. N-linked (GlcNAc...) asparagine glycosylation is found at Asn-258, Asn-314, Asn-324, Asn-353, Asn-370, Asn-410, Asn-417, Asn-424, Asn-458, Asn-462, and Asn-478. Positions 446–807 are mediates interaction with laminin-2; sequence DKRLVLWALL…LDAGETICLC (362 aa). Cystine bridges form between Cys-498–Cys-533 and Cys-521–Cys-550. Asn-536, Asn-549, Asn-563, Asn-570, Asn-665, Asn-674, Asn-720, Asn-746, Asn-781, and Asn-788 each carry an N-linked (GlcNAc...) asparagine glycan. Residues 640-823 enclose the GAIN-B domain; it reads PHVNIETQNL…GVLMDLPRSA (184 aa). Disulfide bonds link Cys-773–Cys-805 and Cys-792–Cys-807. The GPS stretch occupies residues 773 to 823; sequence CAFWDMNKNKSFGGWNTSGCVAHSDLDAGETICLCSHFTHFGVLMDLPRSA. The segment at 812-820 is stachel; sequence HFGVLMDLP. The chain crosses the membrane as a helical span at residues 833–853; the sequence is VLTFITYIGCGISAIFSAATL. Topologically, residues 854 to 873 are cytoplasmic; sequence LTYVAFEKLRRDYPSKILMN. Residues 874–894 traverse the membrane as a helical segment; the sequence is LSSALLFLNLIFLLDGWVTSF. The Extracellular segment spans residues 895–899; sequence GVAGL. A helical transmembrane segment spans residues 900–920; that stretch reads CTAVAALLHFFLLATFTWMGL. The Cytoplasmic segment spans residues 921 to 940; the sequence is EAIHMYIALVKVFNTYIHRY. Residues 941 to 961 form a helical membrane-spanning segment; it reads ILKFCIIGWGLPALVVSIILV. The Extracellular segment spans residues 962–994; the sequence is SRRQNEVYGKESYGKDQDDEFCWIQDPVVFYVS. The helical transmembrane segment at 995–1015 threads the bilayer; that stretch reads CAGYFGVMFFLNVAMFIVVMV. Residues 1016-1039 are Cytoplasmic-facing; it reads QICGRNGKRSNRTLREEVLRNLRS. A helical transmembrane segment spans residues 1040–1060; that stretch reads VVSLTFLLGMTWGFAFFAWGP. The Extracellular portion of the chain corresponds to 1061–1062; that stretch reads LN. The chain crosses the membrane as a helical span at residues 1063 to 1083; that stretch reads IPFMYLFSIFNSLQGLFIFIF. Asn-1073 provides a ligand contact to 17alpha-hydroxyprogesterone. Over 1084-1165 the chain is Cytoplasmic; sequence HCAMKENVQK…KRNSHSDNFS (82 aa). Over residues 1126 to 1154 the composition is skewed to low complexity; the sequence is NLGKSLSSSSIGSNSTYLTSKSKSSSTTY. The disordered stretch occupies residues 1126–1165; sequence NLGKSLSSSSIGSNSTYLTSKSKSSSTTYFKRNSHSDNFS. Ser-1135 and Ser-1138 each carry phosphoserine.

It belongs to the G-protein coupled receptor 2 family. Adhesion G-protein coupled receptor (ADGR) subfamily. In terms of assembly, heterodimer of 2 chains generated by proteolytic processing; the large extracellular N-terminal fragment and the membrane-bound C-terminal fragment predominantly remain associated and non-covalently linked. Interacts with Laminin-2; this interaction stabilizes the receptor in an inactive state. Laminin-2 polymerization could facilitate ADGRG6-NTF removal, thereby exposing the tethered agonist to drive myelination. Interacts with PRNP. Interacts with ITGB1. Interacts with LRP1. In terms of processing, proteolytically cleaved into 2 conserved sites: one in the GPS region of the GAIN-B domain (S1 site) and the other in the middle of the extracellular domain (S2 site). The proteolytic cleavage at S1 site generates an extracellular subunit and a seven-transmembrane subunit. Furin is involved in the cleavage of the S2 site generating a soluble fragment. Processing at the GPS region occurred independent of and probably prior to the cleavage at the S2 site. Proteolytic cleavage is required for activation of the receptor. As to expression, expressed at high levels in the heart, somite and otic vesicle during embryogenesis and in adult lung.

The protein resides in the cell membrane. Forms a heterodimer of 2 chains generated by proteolytic processing that remain associated through non-covalent interactions mediated by the GAIN-B domain. In the inactivated receptor, the Stachel sequence (also named stalk) is embedded in the GAIN-B domain, where it adopts a beta-strand conformation. On activation, the Stachel moves into the 7 transmembrane region and adopts a twisted hook-shaped configuration that forms contacts within the receptor, leading to coupling of a G-alpha protein, which activates signaling. The cleaved GAIN-B and N-terminal domains can then dissociate from the rest of the receptor. Adhesion G-protein coupled receptor (aGPCR) for steroid hormones, such as progesterone and 17alpha-hydroxyprogesterone (17OHP). Involved in many biological processes, such as myelination, sprouting angiogenesis, placenta, ear and cartilage development. Ligand binding causes a conformation change that triggers signaling via guanine nucleotide-binding proteins (G proteins) and modulates the activity of downstream effectors, such as adenylate cyclase. ADGRG6 is coupled to G(i) G alpha proteins and mediates inhibition of adenylate cyclase. Also able to couple to G(q) G proteins. Involved in myelination of the peripheral nervous system: required for differentiation of promyelinating Schwann cells and for normal myelination of axons. Also acts as a regulator of body length and bone mass. Acts as a regulator of blood-brain barrier formation in the central nervous system vie its association with LRP1 and ITGB1. This is Adhesion G-protein coupled receptor G6 from Mus musculus (Mouse).